A 318-amino-acid polypeptide reads, in one-letter code: Probable ABC transporter permease protein MG189 (318 aa).

A run of 6 helical transmembrane segments spans residues 42 to 62 (VLGFFGLIVIFPFYLMVVVSF), 98 to 118 (AIVVNTLVTVLSVLLTLFFTI), 134 to 154 (LVWFFFLSVLILPESALLIGQ), 169 to 189 (PLIVLGLIMPFVSSVFSGFMY), 230 to 250 (VGILTAFSAWNSYLWPLLLLG), and 282 to 302 (LKMSAAILAILPMFIIYFLFH). Residues 99–301 (IVVNTLVTVL…LPMFIIYFLF (203 aa)) form the ABC transmembrane type-1 domain.

This sequence belongs to the binding-protein-dependent transport system permease family. MalFG subfamily.

It localises to the cell membrane. In terms of biological role, probably part of a binding-protein-dependent transport system. Probably responsible for the translocation of the substrate across the membrane. The sequence is that of Probable ABC transporter permease protein MG189 from Mycoplasma genitalium (strain ATCC 33530 / DSM 19775 / NCTC 10195 / G37) (Mycoplasmoides genitalium).